Here is a 220-residue protein sequence, read N- to C-terminus: Protein Syd (220 aa).

This sequence belongs to the Syd family.

It localises to the cell inner membrane. Functionally, interacts with the SecY protein in vivo. May bind preferentially to an uncomplexed state of SecY, thus functioning either as a chelating agent for excess SecY in the cell or as a regulatory factor that negatively controls the translocase function. The polypeptide is Protein Syd (Shewanella loihica (strain ATCC BAA-1088 / PV-4)).